Reading from the N-terminus, the 1663-residue chain is Cortactin-binding protein 2 (1663 aa).

5 disordered regions span residues methionine 1 to alanine 23, lysine 203 to glutamate 222, glycine 367 to glycine 440, glycine 454 to serine 478, and arginine 498 to serine 616. A coiled-coil region spans residues lysine 119–lysine 276. The segment covering proline 386–serine 396 has biased composition (low complexity). The residue at position 498 (arginine 498) is an Asymmetric dimethylarginine. Polar residues predominate over residues threonine 583–glutamine 593. ANK repeat units follow at residues glycine 709–tyrosine 739, aspartate 743–alanine 772, asparagine 776–histidine 805, glycine 809–valine 838, aspartate 842–glycine 871, and glutamate 912–arginine 942. The tract at residues lysine 1449 to glutamate 1482 is disordered. Serine 1524 carries the phosphoserine modification. The interval glutamine 1581 to lysine 1663 is disordered. The segment covering lysine 1582–lysine 1599 has biased composition (polar residues). The span at serine 1624 to glutamine 1638 shows a compositional bias: low complexity. Over residues isoleucine 1639–valine 1648 the composition is skewed to polar residues. Basic and acidic residues predominate over residues histidine 1653–lysine 1663.

As to quaternary structure, interacts with CTTN/cortactin SH3 domain. Interacts with STRN, STRN4/zinedin and MOB4/phocein; this interactions mediate the association with the STRIPAK core complex and may regulate dendritic spine distribution of the STRIPAK complex in hippocampal neurons. Activation of glutamate receptors weakens the interaction with STRN and STRN4. In terms of tissue distribution, highest expression in brain. Also expressed in kidney, pancreas, lung, heart, liver, skeletal muscle and placenta.

The protein localises to the cytoplasm. It is found in the cell cortex. Its subcellular location is the cell projection. It localises to the dendritic spine. Regulates the dendritic spine distribution of CTTN/cortactin in hippocampal neurons, and thus controls dendritic spinogenesis and dendritic spine maintenance. Associates with the striatin-interacting phosphatase and kinase (STRIPAK) core complex to regulate dendritic spine distribution of the STRIPAK complex in hippocampal neurons. This is Cortactin-binding protein 2 from Homo sapiens (Human).